The sequence spans 162 residues: NADH-quinone oxidoreductase subunit I (162 aa).

4Fe-4S ferredoxin-type domains follow at residues 52–82 and 93–122; these read LRRYPNGEERCIACKLCEAICPAQAITIEAG and TRYDIDMVKCIYCGMCQEACPVDAIVEGPN. Residues Cys62, Cys65, Cys68, Cys72, Cys102, Cys105, Cys108, and Cys112 each coordinate [4Fe-4S] cluster.

It belongs to the complex I 23 kDa subunit family. In terms of assembly, NDH-1 is composed of 14 different subunits. Subunits NuoA, H, J, K, L, M, N constitute the membrane sector of the complex. It depends on [4Fe-4S] cluster as a cofactor.

Its subcellular location is the cell inner membrane. The enzyme catalyses a quinone + NADH + 5 H(+)(in) = a quinol + NAD(+) + 4 H(+)(out). Its function is as follows. NDH-1 shuttles electrons from NADH, via FMN and iron-sulfur (Fe-S) centers, to quinones in the respiratory chain. The immediate electron acceptor for the enzyme in this species is believed to be ubiquinone. Couples the redox reaction to proton translocation (for every two electrons transferred, four hydrogen ions are translocated across the cytoplasmic membrane), and thus conserves the redox energy in a proton gradient. This chain is NADH-quinone oxidoreductase subunit I, found in Methylorubrum populi (strain ATCC BAA-705 / NCIMB 13946 / BJ001) (Methylobacterium populi).